The following is a 389-amino-acid chain: S-adenosylmethionine synthase (389 aa).

Histidine 15 provides a ligand contact to ATP. Aspartate 17 serves as a coordination point for Mg(2+). Glutamate 43 contacts K(+). L-methionine is bound by residues glutamate 56 and glutamine 99. Residues 99-109 (QSPDIAQGVNE) form a flexible loop region. Residues 166–168 (DAK), 234–235 (RF), aspartate 243, 249–250 (RK), alanine 266, and lysine 270 contribute to the ATP site. Aspartate 243 contributes to the L-methionine binding site. Lysine 274 contacts L-methionine.

Belongs to the AdoMet synthase family. As to quaternary structure, homotetramer; dimer of dimers. It depends on Mg(2+) as a cofactor. Requires K(+) as cofactor.

The protein localises to the cytoplasm. It carries out the reaction L-methionine + ATP + H2O = S-adenosyl-L-methionine + phosphate + diphosphate. The protein operates within amino-acid biosynthesis; S-adenosyl-L-methionine biosynthesis; S-adenosyl-L-methionine from L-methionine: step 1/1. Functionally, catalyzes the formation of S-adenosylmethionine (AdoMet) from methionine and ATP. The overall synthetic reaction is composed of two sequential steps, AdoMet formation and the subsequent tripolyphosphate hydrolysis which occurs prior to release of AdoMet from the enzyme. The sequence is that of S-adenosylmethionine synthase from Neisseria meningitidis serogroup B (strain ATCC BAA-335 / MC58).